The chain runs to 702 residues: Dynein axonemal intermediate chain 1 (702 aa).

The interval 1-58 (MLPASSKMPHKQPPPPRKQSISMGRGARKRDEDSGTEVGEGTDEWVQSKATVKPPDQL) is disordered. Phosphoserine is present on residues Ser-134 and Ser-137. 5 WD repeats span residues 383 to 423 (SSES…SQPS), 432 to 475 (KHTD…LVHT), 540 to 580 (AHNM…PMFI), 582 to 622 (DLNS…YEAI), and 630 to 669 (KKKN…RKMP).

The protein belongs to the dynein intermediate chain family. As to quaternary structure, consists of at least two heavy chains and a number of intermediate and light chains. Interacts with BICD2. Interacts with CFAP45 and CFAP52. Interacts with CFAP53.

The protein resides in the cytoplasm. It is found in the cytoskeleton. The protein localises to the cilium axoneme. In terms of biological role, part of the dynein complex of respiratory cilia. This Bos taurus (Bovine) protein is Dynein axonemal intermediate chain 1 (DNAI1).